The chain runs to 141 residues: Large ribosomal subunit protein uL11 (141 aa).

Belongs to the universal ribosomal protein uL11 family. As to quaternary structure, part of the ribosomal stalk of the 50S ribosomal subunit. Interacts with L10 and the large rRNA to form the base of the stalk. L10 forms an elongated spine to which L12 dimers bind in a sequential fashion forming a multimeric L10(L12)X complex. One or more lysine residues are methylated.

Forms part of the ribosomal stalk which helps the ribosome interact with GTP-bound translation factors. The sequence is that of Large ribosomal subunit protein uL11 from Roseiflexus sp. (strain RS-1).